The sequence spans 45 residues: Gene 78 protein (45 aa).

The segment covering 1-14 has biased composition (basic and acidic residues); that stretch reads MKKMSDQLKARLEL. The tract at residues 1-45 is disordered; the sequence is MKKMSDQLKARLELRLSNAAQPHRNRKREMKRPGKGNRNNWKKEY. Residues 23–35 show a composition bias toward basic residues; the sequence is HRNRKREMKRPGK.

This Mycobacterium phage L5 (Mycobacteriophage L5) protein is Gene 78 protein (78).